The chain runs to 382 residues: Galactokinase (382 aa).

Glu34 to Asp37 provides a ligand contact to substrate. Gly124–Ser130 serves as a coordination point for ATP. Mg(2+) contacts are provided by Ser130 and Glu162. Asp174 (proton acceptor) is an active-site residue. Tyr223 contributes to the substrate binding site.

Belongs to the GHMP kinase family. GalK subfamily.

It localises to the cytoplasm. The enzyme catalyses alpha-D-galactose + ATP = alpha-D-galactose 1-phosphate + ADP + H(+). It participates in carbohydrate metabolism; galactose metabolism. In terms of biological role, catalyzes the transfer of the gamma-phosphate of ATP to D-galactose to form alpha-D-galactose-1-phosphate (Gal-1-P). The sequence is that of Galactokinase from Salmonella heidelberg (strain SL476).